We begin with the raw amino-acid sequence, 513 residues long: EGF-like domain-containing protein 1 (513 aa).

Residues 1–21 form the signal peptide; that stretch reads MMHTFLRRLCVVALCLGYIKA. Residues 72-108 form the EGF-like domain; it reads PTALCGPPCLNGGECYEPTVGTYMCMCPEAFYGNKCE. Intrachain disulfides connect Cys76–Cys86, Cys80–Cys96, and Cys98–Cys107. The ZP domain occupies 115–364; sequence ECSGTEITIN…TSCDSVVCPS (250 aa). Residues 356 to 411 are disordered; sequence SCDSVVCPSPPQSVPSNPQNIPPANPQNIPPANPQNIPPANPQISPSSSQRKRRAA. Residues 375–396 show a composition bias toward pro residues; sequence NIPPANPQNIPPANPQNIPPAN. 2 N-linked (GlcNAc...) asparagine glycosylation sites follow: Asn438 and Asn503.

As to expression, component of the acid-insoluble organic matrix of calcified layers of the shell (at protein level).

It is found in the secreted. The chain is EGF-like domain-containing protein 1 from Lottia gigantea (Giant owl limpet).